We begin with the raw amino-acid sequence, 77 residues long: Translation initiation factor IF-1, chloroplastic (77 aa).

An S1-like domain is found at 1–71 (MKEQKLIHEG…TKGRIIYRLR (71 aa)).

Belongs to the IF-1 family. In terms of assembly, component of the 30S ribosomal translation pre-initiation complex which assembles on the 30S ribosome in the order IF-2 and IF-3, IF-1 and N-formylmethionyl-tRNA(fMet); mRNA recruitment can occur at any time during PIC assembly.

It is found in the plastid. The protein localises to the chloroplast. In terms of biological role, one of the essential components for the initiation of protein synthesis. Stabilizes the binding of IF-2 and IF-3 on the 30S subunit to which N-formylmethionyl-tRNA(fMet) subsequently binds. Helps modulate mRNA selection, yielding the 30S pre-initiation complex (PIC). Upon addition of the 50S ribosomal subunit IF-1, IF-2 and IF-3 are released leaving the mature 70S translation initiation complex. The protein is Translation initiation factor IF-1, chloroplastic of Drimys granadensis.